The following is a 1408-amino-acid chain: ABC multidrug transporter MDR1 (1408 aa).

A compositionally biased stretch (low complexity) spans 1 to 13 (MSASPSPIGAAAG). Residues 1–103 (MSASPSPIGA…SISSAVPKSH (103 aa)) form a disordered region. Positions 17–38 (LQARRDEEVVDSEKDALAHDSH) are enriched in basic and acidic residues. 2 helical membrane passes run 147-167 (FAAP…IAAG) and 223-243 (LYLM…MFIW). One can recognise an ABC transmembrane type-1 1 domain in the interval 157-464 (VFGLLLAIAA…LAPELAAVTK (308 aa)). Asn-244 is a glycosylation site (N-linked (GlcNAc...) asparagine). 4 helical membrane passes run 296-316 (KVAL…LAFV), 321-341 (LAGA…IMMT), 408-428 (IMFF…GILV), and 436-456 (GIVI…AMLA). The 246-residue stretch at 499–744 (ISFENVRFHY…ENGPYAQLVN (246 aa)) folds into the ABC transporter 1 domain. 534–541 (GASGSGKS) lines the ATP pocket. 2 helical membrane-spanning segments follow: residues 838 to 858 (IFAF…AILF) and 882 to 902 (LWYF…SAGF). In terms of domain architecture, ABC transmembrane type-1 2 spans 838-1125 (IFAFIAAICA…VFTFVPDASK (288 aa)). Asn-934 is a glycosylation site (N-linked (GlcNAc...) asparagine). Helical transmembrane passes span 952–972 (GLFG…IGGC), 973–993 (IIGL…IPIL), 1072–1092 (GLTF…IIDG), and 1099–1119 (FYTV…VFTF). Residues Asn-1127 and Asn-1182 are each glycosylated (N-linked (GlcNAc...) asparagine). An ABC transporter 2 domain is found at 1162–1402 (VRIEGVHFRY…KGGYYDLVQM (241 aa)). 1197–1204 (GPSGCGKS) provides a ligand contact to ATP. An N-linked (GlcNAc...) asparagine glycan is attached at Asn-1404.

This sequence belongs to the ABC transporter superfamily. ABCB family. Multidrug resistance exporter (TC 3.A.1.201) subfamily.

The protein resides in the cell membrane. It catalyses the reaction itraconazole(in) + ATP + H2O = itraconazole(out) + ADP + phosphate + H(+). The catalysed reaction is voriconazole(in) + ATP + H2O = voriconazole(out) + ADP + phosphate + H(+). It carries out the reaction fluconazole(in) + ATP + H2O = fluconazole(out) + ADP + phosphate + H(+). Its function is as follows. Pleiotropic ABC efflux transporter that confers resistance to structurally and functionally unrelated compounds including azoles such as fluconazole (FLC), itraconazole (ITC), posaconazole (POS), nocodazole and voriconazole (VRC). This is ABC multidrug transporter MDR1 from Cryptococcus deuterogattii (strain R265) (Cryptococcus gattii VGII (strain R265)).